We begin with the raw amino-acid sequence, 251 residues long: tRNA (guanine-N(1)-)-methyltransferase (251 aa).

S-adenosyl-L-methionine contacts are provided by residues Gly-113 and 133–138; that span reads IGDYVL.

The protein belongs to the RNA methyltransferase TrmD family. In terms of assembly, homodimer.

Its subcellular location is the cytoplasm. It catalyses the reaction guanosine(37) in tRNA + S-adenosyl-L-methionine = N(1)-methylguanosine(37) in tRNA + S-adenosyl-L-homocysteine + H(+). Its function is as follows. Specifically methylates guanosine-37 in various tRNAs. The sequence is that of tRNA (guanine-N(1)-)-methyltransferase from Pectobacterium atrosepticum (strain SCRI 1043 / ATCC BAA-672) (Erwinia carotovora subsp. atroseptica).